A 347-amino-acid chain; its full sequence is N-acetyl-gamma-glutamyl-phosphate reductase (347 aa).

Cysteine 152 is a catalytic residue.

It belongs to the NAGSA dehydrogenase family. Type 1 subfamily.

The protein resides in the cytoplasm. It catalyses the reaction N-acetyl-L-glutamate 5-semialdehyde + phosphate + NADP(+) = N-acetyl-L-glutamyl 5-phosphate + NADPH + H(+). Its pathway is amino-acid biosynthesis; L-arginine biosynthesis; N(2)-acetyl-L-ornithine from L-glutamate: step 3/4. Its function is as follows. Catalyzes the NADPH-dependent reduction of N-acetyl-5-glutamyl phosphate to yield N-acetyl-L-glutamate 5-semialdehyde. The chain is N-acetyl-gamma-glutamyl-phosphate reductase from Neisseria gonorrhoeae (strain NCCP11945).